The sequence spans 295 residues: Phosphoribosylaminoimidazole-succinocarboxamide synthase (295 aa).

It belongs to the SAICAR synthetase family.

The catalysed reaction is 5-amino-1-(5-phospho-D-ribosyl)imidazole-4-carboxylate + L-aspartate + ATP = (2S)-2-[5-amino-1-(5-phospho-beta-D-ribosyl)imidazole-4-carboxamido]succinate + ADP + phosphate + 2 H(+). Its pathway is purine metabolism; IMP biosynthesis via de novo pathway; 5-amino-1-(5-phospho-D-ribosyl)imidazole-4-carboxamide from 5-amino-1-(5-phospho-D-ribosyl)imidazole-4-carboxylate: step 1/2. This chain is Phosphoribosylaminoimidazole-succinocarboxamide synthase, found in Corynebacterium ammoniagenes (Brevibacterium ammoniagenes).